The following is a 215-amino-acid chain: V-type ATP synthase subunit D (215 aa).

This sequence belongs to the V-ATPase D subunit family.

Produces ATP from ADP in the presence of a proton gradient across the membrane. The sequence is that of V-type ATP synthase subunit D from Anaeromyxobacter sp. (strain Fw109-5).